We begin with the raw amino-acid sequence, 311 residues long: MKKKIGLLVMAYGTPYKEEDIERYYTHIRRGRKPSPEMLEDLTGRYRAIGGISPLATITLEQAKKLETRLNEMQDEVEYHMYLGLKHIEPFIEDAVQAMHKDGIEDAIALVLAPHYSTFSVKSYVGRAQEEAGKLGNLTIHGIDSWYKEPKFIQYWVDAVKGIYNGMSEAEREKAVLIVSAHSLPEKIIALGDPYPDQLNETADYIARGAEVANYAVGWQSAGNTPDPWIGPDVQDLTRELNEKYGYNSFVYAPVGFVAEHLEVLYDNDFECKVVTDEIGAKYYRPEMPNASDAFIDCLADVVLKKKESVM.

Fe-coproporphyrin III is bound by residues Y12, R29, 45–46 (RY), S53, and Y124. Positions 182 and 263 each coordinate Fe(2+).

The protein belongs to the ferrochelatase family.

Its subcellular location is the cytoplasm. The enzyme catalyses Fe-coproporphyrin III + 2 H(+) = coproporphyrin III + Fe(2+). It participates in porphyrin-containing compound metabolism; protoheme biosynthesis. In terms of biological role, involved in coproporphyrin-dependent heme b biosynthesis. Catalyzes the insertion of ferrous iron into coproporphyrin III to form Fe-coproporphyrin III. This chain is Coproporphyrin III ferrochelatase, found in Bacillus mycoides (strain KBAB4) (Bacillus weihenstephanensis).